The sequence spans 278 residues: Short-chain dehydrogenase RED2 (278 aa).

Positions 15, 70, 132, 178, 182, 211, and 213 each coordinate NADP(+). Catalysis depends on Y178, which acts as the Proton donor. K182 acts as the Lowers pKa of active site Tyr in catalysis.

This sequence belongs to the short-chain dehydrogenases/reductases (SDR) family.

The protein operates within polyketide biosynthesis. In terms of biological role, short-chain dehydrogenase; part of the gene cluster that mediates the biosynthesis of pyriculol and pyriculariol, two heptaketides that induce lesion formation upon application on rice leaves but are dispensable for pathogenicity. The highly reducing polyketide synthase synthesizes the heptaketide backbone of pyriculol and pyriculariol. Pyriculol and pyriculariol contain several hydroxyl moieties and double bonds, so it can be assumed that several reduction steps occur during biosynthesis. These reactions could be executed by PKS19 itself or partly by the tailoring enzymes OXR1, OXR2, RED1, RED2 or RED3, identified within the cluster. The FAD-linked oxidoreductase OXR1 is the only tailoring enzyme for which the function has been determined yet, and is involved in the oxidation of dihydropyriculol and dihydropyriculariol into pyriculol and pyriculariol, respectively. This chain is Short-chain dehydrogenase RED2, found in Pyricularia oryzae (strain 70-15 / ATCC MYA-4617 / FGSC 8958) (Rice blast fungus).